The sequence spans 507 residues: ATP synthase subunit alpha, chloroplastic (507 aa).

An ATP-binding site is contributed by glycine 170–threonine 177.

The protein belongs to the ATPase alpha/beta chains family. As to quaternary structure, F-type ATPases have 2 components, CF(1) - the catalytic core - and CF(0) - the membrane proton channel. CF(1) has five subunits: alpha(3), beta(3), gamma(1), delta(1), epsilon(1). CF(0) has four main subunits: a, b, b' and c.

The protein localises to the plastid. The protein resides in the chloroplast thylakoid membrane. It carries out the reaction ATP + H2O + 4 H(+)(in) = ADP + phosphate + 5 H(+)(out). Produces ATP from ADP in the presence of a proton gradient across the membrane. The alpha chain is a regulatory subunit. This is ATP synthase subunit alpha, chloroplastic from Phalaenopsis aphrodite subsp. formosana (Moth orchid).